Consider the following 392-residue polypeptide: Proteasome-activating nucleotidase (392 aa).

The stretch at 19-53 (IVRLLEEKIESLTKELEKLRQDLNWYKGELEKLLA) forms a coiled coil. ATP contacts are provided by residues 178–183 (GTGKTL) and Y317. Residues 390-392 (KYV) form a docks into pockets in the proteasome alpha-ring to cause gate opening region.

Belongs to the AAA ATPase family. Homohexamer. The hexameric complex has a two-ring architecture resembling a top hat that caps the 20S proteasome core at one or both ends. Upon ATP-binding, the C-terminus of PAN interacts with the alpha-rings of the proteasome core by binding to the intersubunit pockets.

Its subcellular location is the cytoplasm. Functionally, ATPase which is responsible for recognizing, binding, unfolding and translocation of substrate proteins into the archaeal 20S proteasome core particle. Is essential for opening the gate of the 20S proteasome via an interaction with its C-terminus, thereby allowing substrate entry and access to the site of proteolysis. Thus, the C-termini of the proteasomal ATPase function like a 'key in a lock' to induce gate opening and therefore regulate proteolysis. Unfolding activity requires energy from ATP hydrolysis, whereas ATP binding alone promotes ATPase-20S proteasome association which triggers gate opening, and supports translocation of unfolded substrates. This Sulfurisphaera tokodaii (strain DSM 16993 / JCM 10545 / NBRC 100140 / 7) (Sulfolobus tokodaii) protein is Proteasome-activating nucleotidase.